A 333-amino-acid polypeptide reads, in one-letter code: 6-phosphogluconolactonase (333 aa).

This sequence belongs to the cycloisomerase 2 family.

The enzyme catalyses 6-phospho-D-glucono-1,5-lactone + H2O = 6-phospho-D-gluconate + H(+). Its pathway is carbohydrate degradation; pentose phosphate pathway; D-ribulose 5-phosphate from D-glucose 6-phosphate (oxidative stage): step 2/3. Its function is as follows. Catalyzes the hydrolysis of 6-phosphogluconolactone to 6-phosphogluconate. The polypeptide is 6-phosphogluconolactonase (Cronobacter sakazakii (strain ATCC BAA-894) (Enterobacter sakazakii)).